Here is a 194-residue protein sequence, read N- to C-terminus: Adenylate kinase (194 aa).

Position 12 to 17 (12 to 17) interacts with ATP; sequence GSGKTT. Residues 34 to 63 are NMP; it reads STGDLLREEVKKGTPLGATIASFIDNGQLV. Residues Thr35, Arg40, 61-63, 88-91, and Gln95 contribute to the AMP site; these read QLV and GFPR. Positions 130–136 are LID; it reads GRARGAD. Position 131 (Arg131) interacts with ATP. Residues Arg133 and Arg145 each contribute to the AMP site. Position 173 (Arg173) interacts with ATP.

The protein belongs to the adenylate kinase family. As to quaternary structure, monomer.

Its subcellular location is the cytoplasm. The catalysed reaction is AMP + ATP = 2 ADP. It functions in the pathway purine metabolism; AMP biosynthesis via salvage pathway; AMP from ADP: step 1/1. Functionally, catalyzes the reversible transfer of the terminal phosphate group between ATP and AMP. Plays an important role in cellular energy homeostasis and in adenine nucleotide metabolism. The polypeptide is Adenylate kinase (Nitratiruptor sp. (strain SB155-2)).